The sequence spans 230 residues: NAD(P)H-hydrate epimerase (230 aa).

In terms of domain architecture, YjeF N-terminal spans 11–218 (AIAVDQELFN…ALQRKYELNL (208 aa)). A (6S)-NADPHX-binding site is contributed by 61–65 (NNGGD). 2 residues coordinate K(+): Asn62 and Asp126. (6S)-NADPHX-binding positions include 130 to 136 (GFSFKPP) and Asp159. Ser162 is a binding site for K(+).

The protein belongs to the NnrE/AIBP family. K(+) serves as cofactor.

It carries out the reaction (6R)-NADHX = (6S)-NADHX. The catalysed reaction is (6R)-NADPHX = (6S)-NADPHX. Catalyzes the epimerization of the S- and R-forms of NAD(P)HX, a damaged form of NAD(P)H that is a result of enzymatic or heat-dependent hydration. This is a prerequisite for the S-specific NAD(P)H-hydrate dehydratase to allow the repair of both epimers of NAD(P)HX. This is NAD(P)H-hydrate epimerase from Drosophila melanogaster (Fruit fly).